Consider the following 478-residue polypeptide: Membrane-bound lytic murein transglycosylase F (478 aa).

The first 22 residues, 1 to 22 (MTRFLFAIILGFLLTACQQVTV), serve as a signal peptide directing secretion. The interval 23–257 (EETEYVPHKL…HLNEKYFGHV (235 aa)) is non-LT domain. Positions 258–478 (KRFDYIDTRA…PGTLSPDKPK (221 aa)) are LT domain. Residue glutamate 302 is part of the active site. The segment at 446-478 (SKQQNSDEEEPSDLASEDGPAPVPGTLSPDKPK) is disordered. Over residues 451–461 (SDEEEPSDLAS) the composition is skewed to acidic residues.

This sequence in the N-terminal section; belongs to the bacterial solute-binding protein 3 family. In the C-terminal section; belongs to the transglycosylase Slt family.

Its subcellular location is the cell outer membrane. It carries out the reaction Exolytic cleavage of the (1-&gt;4)-beta-glycosidic linkage between N-acetylmuramic acid (MurNAc) and N-acetylglucosamine (GlcNAc) residues in peptidoglycan, from either the reducing or the non-reducing ends of the peptidoglycan chains, with concomitant formation of a 1,6-anhydrobond in the MurNAc residue.. In terms of biological role, murein-degrading enzyme that degrades murein glycan strands and insoluble, high-molecular weight murein sacculi, with the concomitant formation of a 1,6-anhydromuramoyl product. Lytic transglycosylases (LTs) play an integral role in the metabolism of the peptidoglycan (PG) sacculus. Their lytic action creates space within the PG sacculus to allow for its expansion as well as for the insertion of various structures such as secretion systems and flagella. This is Membrane-bound lytic murein transglycosylase F from Shewanella sp. (strain ANA-3).